A 294-amino-acid chain; its full sequence is Glyceraldehyde-3-phosphate dehydrogenase (294 aa).

NAD(+)-binding residues include aspartate 19, lysine 63, and threonine 105. Residues 134–136, threonine 165, 194–195, and arginine 217 each bind D-glyceraldehyde 3-phosphate; these read SCT and TG. Cysteine 135 acts as the Nucleophile in catalysis.

Belongs to the glyceraldehyde-3-phosphate dehydrogenase family. As to quaternary structure, homotetramer.

It localises to the cytoplasm. It catalyses the reaction D-glyceraldehyde 3-phosphate + phosphate + NAD(+) = (2R)-3-phospho-glyceroyl phosphate + NADH + H(+). It participates in carbohydrate degradation; glycolysis; pyruvate from D-glyceraldehyde 3-phosphate: step 1/5. In terms of biological role, catalyzes the oxidative phosphorylation of glyceraldehyde 3-phosphate (G3P) to 1,3-bisphosphoglycerate (BPG) using the cofactor NAD. The first reaction step involves the formation of a hemiacetal intermediate between G3P and a cysteine residue, and this hemiacetal intermediate is then oxidized to a thioester, with concomitant reduction of NAD to NADH. The reduced NADH is then exchanged with the second NAD, and the thioester is attacked by a nucleophilic inorganic phosphate to produce BPG. The chain is Glyceraldehyde-3-phosphate dehydrogenase (gap) from Atlantibacter hermannii (Escherichia hermannii).